The chain runs to 338 residues: Nicotinate-nucleotide--dimethylbenzimidazole phosphoribosyltransferase (338 aa).

The active-site Proton acceptor is the Glu305.

This sequence belongs to the CobT family.

The catalysed reaction is 5,6-dimethylbenzimidazole + nicotinate beta-D-ribonucleotide = alpha-ribazole 5'-phosphate + nicotinate + H(+). The protein operates within nucleoside biosynthesis; alpha-ribazole biosynthesis; alpha-ribazole from 5,6-dimethylbenzimidazole: step 1/2. Functionally, catalyzes the synthesis of alpha-ribazole-5'-phosphate from nicotinate mononucleotide (NAMN) and 5,6-dimethylbenzimidazole (DMB). This chain is Nicotinate-nucleotide--dimethylbenzimidazole phosphoribosyltransferase, found in Sinorhizobium medicae (strain WSM419) (Ensifer medicae).